A 290-amino-acid polypeptide reads, in one-letter code: Small ribosomal subunit protein uS11 (290 aa).

Positions 243–271 are disordered; that stretch reads DWEAAPAGFPATGEWSDAAPGAAAPNWDA. Over residues 257-271 the composition is skewed to low complexity; that stretch reads WSDAAPGAAAPNWDA.

The protein belongs to the universal ribosomal protein uS2 family. In terms of assembly, component of the small ribosomal subunit (SSU). Mature N.crassa ribosomes consist of a small (40S) and a large (60S) subunit. The 40S small subunit contains 1 molecule of ribosomal RNA (18S rRNA) and at least 32 different proteins. The large 60S subunit contains 3 rRNA molecules (26S, 5.8S and 5S rRNA) and at least 42 different proteins. Interacts with rps21.

The protein resides in the cytoplasm. Functionally, component of the ribosome, a large ribonucleoprotein complex responsible for the synthesis of proteins in the cell. The small ribosomal subunit (SSU) binds messenger RNAs (mRNAs) and translates the encoded message by selecting cognate aminoacyl-transfer RNA (tRNA) molecules. The large subunit (LSU) contains the ribosomal catalytic site termed the peptidyl transferase center (PTC), which catalyzes the formation of peptide bonds, thereby polymerizing the amino acids delivered by tRNAs into a polypeptide chain. The nascent polypeptides leave the ribosome through a tunnel in the LSU and interact with protein factors that function in enzymatic processing, targeting, and the membrane insertion of nascent chains at the exit of the ribosomal tunnel. uS2 is required for the assembly and/or stability of the 40S ribosomal subunit. Required for the processing of the 20S rRNA-precursor to mature 18S rRNA in a late step of the maturation of 40S ribosomal subunits. The protein is Small ribosomal subunit protein uS11 of Neurospora crassa (strain ATCC 24698 / 74-OR23-1A / CBS 708.71 / DSM 1257 / FGSC 987).